We begin with the raw amino-acid sequence, 201 residues long: Recombination protein RecR (201 aa).

The C4-type zinc-finger motif lies at 60-75; that stretch reads CSCCGNVDTSDPCTIC. Residues 83–178 form the Toprim domain; it reads ATLIVVEDVS…RVTRLAHGVP (96 aa).

The protein belongs to the RecR family.

Functionally, may play a role in DNA repair. It seems to be involved in an RecBC-independent recombinational process of DNA repair. It may act with RecF and RecO. In Brucella melitensis biotype 2 (strain ATCC 23457), this protein is Recombination protein RecR.